The chain runs to 152 residues: MGRFGYAFQNYDATRHVRSSVREKDMSHKHAREVAVAIKGLSIEKARDYLQAVVNKDRAVAFRRYKNQVGHKADPGMMSGRYPQKTAREFIKVLDNLESNAEYKGMDLDRLKIVNATVHKGVIVKRFIPRAMGRATPKNNVLTHVELVAQEI.

The protein belongs to the universal ribosomal protein uL22 family. As to quaternary structure, part of the 50S ribosomal subunit.

In terms of biological role, this protein binds specifically to 23S rRNA. It makes multiple contacts with different domains of the 23S rRNA in the assembled 50S subunit and ribosome. The globular domain of the protein is located near the polypeptide exit tunnel on the outside of the subunit, while an extended beta-hairpin is found that lines the wall of the exit tunnel in the center of the 70S ribosome. In Nitrosopumilus maritimus (strain SCM1), this protein is Large ribosomal subunit protein uL22.